A 561-amino-acid chain; its full sequence is MCGIWALFGSDECLSVQCLSAMKIAHRGPDAFRFENVNGFTNCCFGFHRLAVVDQLYGMQPIRVKKFPYLWLCYNGEIYNFKQLQEQFGFEYQTLVDGEVILHLYNRGGIEQTASMLDGVFAFILLDTANRKVFLARDTYGVRPLFKVLTDDGFLGVCSEAKGLINLKHSTSLFPKVEPFLPGHYEVLDLKPSGKVVSVEVVKFHSYKDEPLHAACDTVGNLPSGFDLETVKSNIRVLFENAVRKRLMAHRRIGCLLSGGLDSSLVAAVLLKLMKEMNIKYPLQTFAIGMENSPDLLAARKVAAHIGSEHHEVIFNSEEGIQAVEEVIFSLETYDITTVRASIGMYLVSKYIRKKTDSVVIFSGEGSDELTQGYIYFHKAPSPEEAAEESERLLKELYLFDVLRADRTTAAHGLELRVPFLDHRFTSYYLSLPAELRIPKNGIEKYLLRQSFEDSNLLPKEILWRPKEAFSDGIASVKKSWFSILQDYIDQQVDDLLLEKAAEKYPFNPPRTKESYYYRQIFEKHYPGRSSWLPHYWMPRWVEATDPSARTLKHYKSAIQE.

The active-site For GATase activity is the Cys2. Positions 2 to 191 constitute a Glutamine amidotransferase type-2 domain; it reads CGIWALFGSD…PGHYEVLDLK (190 aa). L-glutamine-binding positions include 49–53, 75–77, and Asp97; these read RLAVV and NGE. An Asparagine synthetase domain is found at 213–536; sequence HAACDTVGNL…PGRSSWLPHY (324 aa). Residues Leu256, Ile288, and 363–364 each bind ATP; that span reads SG.

The enzyme catalyses L-aspartate + L-glutamine + ATP + H2O = L-asparagine + L-glutamate + AMP + diphosphate + H(+). It functions in the pathway amino-acid biosynthesis; L-asparagine biosynthesis; L-asparagine from L-aspartate (L-Gln route): step 1/1. The chain is Asparagine synthetase [glutamine-hydrolyzing] (ASNS) from Gallus gallus (Chicken).